A 318-amino-acid chain; its full sequence is MAPWAEAEHSALNPLRAVWLTLTAAFLLTLLLQLLPPGLLPGCAIFQDLIRYGKTKCGEPSRPAACRAFDVPKRYFSHFYIISVLWNGFLLWCLTQSLFLGAPFPSWLHGLLRILGAAQFQGGELALSAFLVLVFLWLHSLRRLFECLYVSVFSNVMIHVVQYCFGLVYYVLVGLTVLSQVPMDGRNAYITGKNLLMQARWFHILGMMMFIWSSAHQYKCHVILGNLRKNKAGVVIHCNHRIPFGDWFEYVSSPNYLAELMIYVSMAVTFGFHNLTWWLVVTNVFFNQALSAFLSHQFYKSKFVSYPKHRKAFLPFLF.

Topologically, residues 1 to 11 (MAPWAEAEHSA) are cytoplasmic. The chain crosses the membrane as a helical span at residues 12-34 (LNPLRAVWLTLTAAFLLTLLLQL). The Lumenal segment spans residues 35–80 (LPPGLLPGCAIFQDLIRYGKTKCGEPSRPAACRAFDVPKRYFSHFY). The helical transmembrane segment at 81–101 (IISVLWNGFLLWCLTQSLFLG) threads the bilayer. The Cytoplasmic segment spans residues 102–117 (APFPSWLHGLLRILGA). The helical transmembrane segment at 118–138 (AQFQGGELALSAFLVLVFLWL) threads the bilayer. Residues 139-157 (HSLRRLFECLYVSVFSNVM) lie on the Lumenal side of the membrane. A helical membrane pass occupies residues 158 to 178 (IHVVQYCFGLVYYVLVGLTVL). Topologically, residues 179–194 (SQVPMDGRNAYITGKN) are cytoplasmic. Residues 195–215 (LLMQARWFHILGMMMFIWSSA) traverse the membrane as a helical segment. At 216 to 260 (HQYKCHVILGNLRKNKAGVVIHCNHRIPFGDWFEYVSSPNYLAEL) the chain is on the lumenal side. A helical transmembrane segment spans residues 261 to 281 (MIYVSMAVTFGFHNLTWWLVV). Over 282–318 (TNVFFNQALSAFLSHQFYKSKFVSYPKHRKAFLPFLF) the chain is Cytoplasmic.

It belongs to the steroid 5-alpha reductase family. Polyprenal reductase subfamily. In terms of tissue distribution, expressed in preadipocytes (at protein level). Overexpressed in hormone-refractory prostate cancers (HRPC). Almost no or little expression in normal adult organs.

It is found in the endoplasmic reticulum membrane. The catalysed reaction is a di-trans,poly-cis-dolichal + NADP(+) = a di-trans,poly-cis-polyprenal + NADPH + H(+). The enzyme catalyses a 3-oxo-5alpha-steroid + NADP(+) = a 3-oxo-Delta(4)-steroid + NADPH + H(+). It catalyses the reaction androst-4-ene-3,17-dione + NADPH + H(+) = 5alpha-androstan-3,17-dione + NADP(+). It carries out the reaction 17beta-hydroxy-5alpha-androstan-3-one + NADP(+) = testosterone + NADPH + H(+). It functions in the pathway protein modification; protein glycosylation. In terms of biological role, plays a key role in early steps of protein N-linked glycosylation by being involved in the conversion of polyprenol into dolichol. Acts as a polyprenal reductase that mediates the reduction of polyprenal into dolichal in a NADP-dependent mechanism. Dolichols are required for the synthesis of dolichol-linked monosaccharides and the oligosaccharide precursor used for N-glycosylation. Also able to convert testosterone (T) into 5-alpha-dihydrotestosterone (DHT). This chain is Polyprenal reductase, found in Homo sapiens (Human).